We begin with the raw amino-acid sequence, 837 residues long: Exonuclease 1 (837 aa).

The interval 1–99 is N-domain; that stretch reads MGIQGLLQFI…RSRRERRQSN (99 aa). Residues Asp-30, Asp-78, Glu-150, Asp-152, Asp-171, Asp-173, and Asp-225 each contribute to the Mg(2+) site. The interaction with MSH3 stretch occupies residues 129–386; the sequence is MAHKVIKAAR…RLEVNSVSHA (258 aa). Residues 138-229 form an I-domain region; sequence RALGVDCLVA…ILSGCDYLAS (92 aa). Disordered stretches follow at residues 345-367 and 440-477; these read TMPAHSRSHSWNEKAGQKPPGTN and IKENGCGDGTSPNSSKMSKSCPDSGTAHKTDAHTPSKM. The interval 387-488 is interaction with MLH1; it reads PQLKEKPSTL…NKFATFLQRR (102 aa). A compositionally biased stretch (polar residues) spans 449 to 462; sequence TSPNSSKMSKSCPD. Position 480 is an N6-acetyllysine (Lys-480). The tract at residues 555 to 589 is disordered; the sequence is NGTHNLSSQIPGNAAVSPEDEAQSSETSKLLGAMS. Residues 556–565 show a composition bias toward polar residues; it reads GTHNLSSQIP. A phosphoserine mark is found at Ser-589 and Ser-601. Residues 591-837 are interaction with MSH2; that stretch reads PSLGTLRSCF…CVRAQRAIFH (247 aa). The disordered stretch occupies residues 608–740; that stretch reads EFSRTPSPSA…GLCRSSSMDS (133 aa). 3 stretches are compositionally biased toward polar residues: residues 611 to 623, 665 to 690, and 699 to 713; these read RTPSPSASTTLQQ, SSRSQESMDSSCGLNTSSLSQPSSRD, and NNKSLDNQGEQNSKQ. Thr-612 carries the post-translational modification Phosphothreonine. Residues Ser-614 and Ser-666 each carry the phosphoserine modification. The residue at position 737 (Ser-737) is a Phosphoserine. Positions 778-837 are interaction with MLH1; that stretch reads LQTKISELWKNFGFKKDSEKLPSCKKPLSPVKDNIQLTPETEDEIFNKPECVRAQRAIFH.

It belongs to the XPG/RAD2 endonuclease family. EXO1 subfamily. Interacts with the MLH1-PMS2 heterodimer via MLH1. Interacts with MSH3. Interacts with the MSH2-MSH6 heterodimer via MSH2, and this interaction may increase the processivity of the 5'-&gt;3' exonuclease activity. Interacts with PCNA, and this interaction may both stimulate the cryptic 3'-&gt;5' exonuclease activity and suppress the 5'-&gt;3' exonuclease activity. Interacts with WRN, and this interaction stimulates both the 5'-&gt;3' exonuclease activity and cleavage of 5'-overhanging flap structures. Interacts with RECQL/RECQ1, and this interaction stimulates cleavage of 5'-overhanging flap structures. Interacts with DNA helicase ZGRF1; the interaction is increased following DNA damage induction. Requires Mg(2+) as cofactor. Phosphorylated upon DNA damage and in response to agents stalling DNA replication, probably by ATM or ATR. In terms of tissue distribution, highly expressed in the spleen and testis. Also expressed in the bone marrow, brain, lung, lymph node and thymus.

The protein localises to the nucleus. 5'-&gt;3' double-stranded DNA exonuclease which may also possess a cryptic 3'-&gt;5' double-stranded DNA exonuclease activity. Functions in DNA mismatch repair (MMR) to excise mismatch-containing DNA tracts directed by strand breaks located either 5' or 3' to the mismatch. Also exhibits endonuclease activity against 5'-overhanging flap structures similar to those generated by displacement synthesis when DNA polymerase encounters the 5'-end of a downstream Okazaki fragment. Required for somatic hypermutation (SHM) and class switch recombination (CSR) of immunoglobulin genes. Essential for male and female meiosis. This is Exonuclease 1 (Exo1) from Mus musculus (Mouse).